Here is a 324-residue protein sequence, read N- to C-terminus: Acetyl-coenzyme A carboxylase carboxyl transferase subunit alpha (324 aa).

Residues 41 to 291 (RLDRLKEKIY…QEYVLQEWLK (251 aa)) enclose the CoA carboxyltransferase C-terminal domain.

This sequence belongs to the AccA family. As to quaternary structure, acetyl-CoA carboxylase is a heterohexamer composed of biotin carboxyl carrier protein (AccB), biotin carboxylase (AccC) and two subunits each of ACCase subunit alpha (AccA) and ACCase subunit beta (AccD).

The protein localises to the cytoplasm. It catalyses the reaction N(6)-carboxybiotinyl-L-lysyl-[protein] + acetyl-CoA = N(6)-biotinyl-L-lysyl-[protein] + malonyl-CoA. The protein operates within lipid metabolism; malonyl-CoA biosynthesis; malonyl-CoA from acetyl-CoA: step 1/1. Functionally, component of the acetyl coenzyme A carboxylase (ACC) complex. First, biotin carboxylase catalyzes the carboxylation of biotin on its carrier protein (BCCP) and then the CO(2) group is transferred by the carboxyltransferase to acetyl-CoA to form malonyl-CoA. The protein is Acetyl-coenzyme A carboxylase carboxyl transferase subunit alpha of Chlamydia muridarum (strain MoPn / Nigg).